The sequence spans 356 residues: S-adenosylmethionine:tRNA ribosyltransferase-isomerase (356 aa).

This sequence belongs to the QueA family. Monomer.

It localises to the cytoplasm. It carries out the reaction 7-aminomethyl-7-carbaguanosine(34) in tRNA + S-adenosyl-L-methionine = epoxyqueuosine(34) in tRNA + adenine + L-methionine + 2 H(+). It functions in the pathway tRNA modification; tRNA-queuosine biosynthesis. Its function is as follows. Transfers and isomerizes the ribose moiety from AdoMet to the 7-aminomethyl group of 7-deazaguanine (preQ1-tRNA) to give epoxyqueuosine (oQ-tRNA). The chain is S-adenosylmethionine:tRNA ribosyltransferase-isomerase from Serratia proteamaculans (strain 568).